The sequence spans 215 residues: Chaperone protein TorD (215 aa).

This sequence belongs to the TorD/DmsD family. TorD subfamily.

It is found in the cytoplasm. In terms of biological role, involved in the biogenesis of TorA. Acts on TorA before the insertion of the molybdenum cofactor and, as a result, probably favors a conformation of the apoenzyme that is competent for acquiring the cofactor. The polypeptide is Chaperone protein TorD (Shewanella piezotolerans (strain WP3 / JCM 13877)).